The chain runs to 218 residues: Peptide methionine sulfoxide reductase MsrA (218 aa).

Cysteine 57 is a catalytic residue.

It belongs to the MsrA Met sulfoxide reductase family.

It carries out the reaction L-methionyl-[protein] + [thioredoxin]-disulfide + H2O = L-methionyl-(S)-S-oxide-[protein] + [thioredoxin]-dithiol. It catalyses the reaction [thioredoxin]-disulfide + L-methionine + H2O = L-methionine (S)-S-oxide + [thioredoxin]-dithiol. Functionally, has an important function as a repair enzyme for proteins that have been inactivated by oxidation. Catalyzes the reversible oxidation-reduction of methionine sulfoxide in proteins to methionine. This chain is Peptide methionine sulfoxide reductase MsrA, found in Brucella abortus (strain S19).